Consider the following 85-residue polypeptide: Alpha-defensin 14 (85 aa).

The N-terminal stretch at 1 to 11 (ALVLLAFQVQA) is a signal peptide. A propeptide spanning residues 12–50 (DPIQNTDEETKTEEQPGEDDQAVSVSFGDPEGSSLQEES) is cleaved from the precursor. The disordered stretch occupies residues 13 to 48 (PIQNTDEETKTEEQPGEDDQAVSVSFGDPEGSSLQE). 3 disulfides stabilise this stretch: Cys-56/Cys-84, Cys-58/Cys-73, and Cys-63/Cys-83.

Belongs to the alpha-defensin family. In terms of tissue distribution, paneth cells of the small bowel.

Its subcellular location is the secreted. Probably contributes to the antimicrobial barrier function of the small bowel mucosa. The protein is Alpha-defensin 14 (Defa14) of Mus musculus (Mouse).